Reading from the N-terminus, the 200-residue chain is Signal peptidase complex catalytic subunit SEC11 (200 aa).

Topologically, residues 1-15 are cytoplasmic; that stretch reads MFAELAPYLSNPRQT. The helical; Signal-anchor for type II membrane protein transmembrane segment at 16 to 33 threads the bilayer; that stretch reads LAQILNFALVLSTAFMGW. The Lumenal segment spans residues 34-200; the sequence is KALSVYTNSS…MGVMVMLQRE (167 aa). A glycan (N-linked (GlcNAc...) asparagine) is linked at N41. Residues S53 and H92 each act as charge relay system in the active site. The segment at 101 to 131 is disordered; sequence GDGGKKSQRRLEKEADKRSGPGLSSPISHQM. Residues 103–119 show a composition bias toward basic and acidic residues; it reads GGKKSQRRLEKEADKRS. D142 functions as the Charge relay system in the catalytic mechanism. The interval 186–197 is C-terminal short (CTS) helix; it reads VLLGIMGVMVML.

Belongs to the peptidase S26B family. As to quaternary structure, component of the signal peptidase complex (SPC) composed of a catalytic subunit SEC11 and three accessory subunits SPC1, SPC2 and SPC3. The complex induces a local thinning of the ER membrane which is used to measure the length of the signal peptide (SP) h-region of protein substrates. This ensures the selectivity of the complex towards h-regions shorter than 18-20 amino acids. SPC associates with the translocon complex.

Its subcellular location is the endoplasmic reticulum membrane. The catalysed reaction is Cleavage of hydrophobic, N-terminal signal or leader sequences from secreted and periplasmic proteins.. In terms of biological role, catalytic component of the signal peptidase complex (SPC) which catalyzes the cleavage of N-terminal signal sequences from nascent proteins as they are translocated into the lumen of the endoplasmic reticulum. Specifically cleaves N-terminal signal peptides that contain a hydrophobic alpha-helix (h-region) shorter than 18-20 amino acids. The polypeptide is Signal peptidase complex catalytic subunit SEC11 (SEC11) (Arthroderma gypseum (strain ATCC MYA-4604 / CBS 118893) (Microsporum gypseum)).